We begin with the raw amino-acid sequence, 489 residues long: Betaine aldehyde dehydrogenase (489 aa).

Positions 26 and 93 each coordinate K(+). Gly150 to Trp152 is an NAD(+) binding site. Lys162 acts as the Charge relay system in catalysis. Residue Lys176–Glu179 participates in NAD(+) binding. Val180 contacts K(+). Gly229–Thr232 serves as a coordination point for NAD(+). Position 245 (Leu245) interacts with K(+). Glu251 (proton acceptor) is an active-site residue. Gly253, Cys285, and Glu386 together coordinate NAD(+). Catalysis depends on Cys285, which acts as the Nucleophile. Cys285 bears the Cysteine sulfenic acid (-SOH) mark. Residues Lys456 and Gly459 each coordinate K(+). Residue Glu463 is the Charge relay system of the active site.

This sequence belongs to the aldehyde dehydrogenase family. Dimer of dimers. K(+) is required as a cofactor.

It catalyses the reaction betaine aldehyde + NAD(+) + H2O = glycine betaine + NADH + 2 H(+). It participates in amine and polyamine biosynthesis; betaine biosynthesis via choline pathway; betaine from betaine aldehyde: step 1/1. Its function is as follows. Involved in the biosynthesis of the osmoprotectant glycine betaine. Catalyzes the irreversible oxidation of betaine aldehyde to the corresponding acid. This Burkholderia lata (strain ATCC 17760 / DSM 23089 / LMG 22485 / NCIMB 9086 / R18194 / 383) protein is Betaine aldehyde dehydrogenase.